Consider the following 69-residue polypeptide: Small integral membrane protein 20 (69 aa).

Topologically, residues 1 to 8 are mitochondrial matrix; the sequence is MAAARNLR. A helical membrane pass occupies residues 9-29; sequence TALIFGGFISMVGAAFYPIYF. The Mitochondrial intermembrane portion of the chain corresponds to 30–69; that stretch reads RPLLRLEEYQKEQAVNRAGIVQEDVQPPGLKVWSDPFGRK. At F66 the chain carries Phenylalanine amide.

As to quaternary structure, component of the MITRAC (mitochondrial translation regulation assembly intermediate of cytochrome c oxidase complex) complex, the core components of this complex being Coa3/Mitrac12 and Cox14. Interacts with Coa3/Mitrac12 and Cox4i1. Directly interacts with newly synthesized Mt-Co1/Cox1. Highly expressed in the hypothalamus, substantia nigra reticulata, Edinger-Westphal nucleus, and nucleus of the solitary tract/dorsal motor nucleus of the vagus, the spinal cord, and sensory ganglia (at protein level). Also expressed in the heart, thymus, esophagus, stomach, spleen, lung, pituitary gland, kidney, jejunum, duodenum, ileum, cerebrum, pons, and colon (at protein level). Expressed in preadipocytes and apidocytes (at protein level). Expressed in pancreatic islet cells (at protein level).

It is found in the mitochondrion inner membrane. It localises to the secreted. In terms of biological role, component of the MITRAC (mitochondrial translation regulation assembly intermediate of cytochrome c oxidase complex) complex, that regulates cytochrome c oxidase assembly. Promotes the progression of complex assembly after the association of Mt-Co1/Cox11 with Cox4I1 and Cox6c. Chaperone-like assembly factor required to stabilize newly synthesized Mt-Co1/Cox1 and to prevent its premature turnover. Functionally, peptide involved in a broad spectrum of regulatory functions. Is a ligand for GPR173. As part of the reproductive cycle, it regulates gonadotropin-releasing hormone (GnRH) signaling in the hypothalamus and pituitary gland which augments the release of luteinizing hormone. More specifically, it regulates the expression of transcription factors CEBPB and POU2F1/OCT1 through the cAMP-PKA signaling pathway, which subsequently regulate the expression of GNRHR and KISS1. Plays a protective role in memory retention through activation of GNRHR. Regulates the secretion of AVP by hypothalamic neurons. Plays a role in the transduction of the itch sensation. Induces anxiolytic effects, reducing behavior associated with anxiety. Regulates food intake as well as satiation and satiety by increasing NUCB2 expression in neurons. In the ovary, it regulates follicular growth by stimulating granulosa cell proliferation by increasing the expression of GPR173, CREB1, CYP19A1, KITLG, FSHR, and LHCGR. It also increases the production of estradiol (E2). In the heart, it regulates contractility and relaxation by activating the AKT1-NOS3 and MAPK1-MAPK3 signaling pathways. It also plays a cardioprotective role during ischemia, where it activates the SAFE and RISK pathways. Stimulates the proliferation and differentiation of preadipocytes. In pancreatic islet cells, it induces proliferation of islet cells as well as the production of INS1 and INS2 through activation of the MAPK1-MAPK3 signaling pathways. This Rattus norvegicus (Rat) protein is Small integral membrane protein 20.